Reading from the N-terminus, the 66-residue chain is Large ribosomal subunit protein bL35 (66 aa).

The span at 1-24 (MPKQKTHRGAAKRFKKTGSGKLKR) shows a compositional bias: basic residues. Residues 1–26 (MPKQKTHRGAAKRFKKTGSGKLKRDH) are disordered.

Belongs to the bacterial ribosomal protein bL35 family.

The sequence is that of Large ribosomal subunit protein bL35 from Bacillus cytotoxicus (strain DSM 22905 / CIP 110041 / 391-98 / NVH 391-98).